A 507-amino-acid chain; its full sequence is ATP synthase subunit alpha, chloroplastic (507 aa).

170-177 (GDRQTGKT) lines the ATP pocket.

The protein belongs to the ATPase alpha/beta chains family. In terms of assembly, F-type ATPases have 2 components, CF(1) - the catalytic core - and CF(0) - the membrane proton channel. CF(1) has five subunits: alpha(3), beta(3), gamma(1), delta(1), epsilon(1). CF(0) has four main subunits: a, b, b' and c.

The protein resides in the plastid. It is found in the chloroplast thylakoid membrane. It carries out the reaction ATP + H2O + 4 H(+)(in) = ADP + phosphate + 5 H(+)(out). In terms of biological role, produces ATP from ADP in the presence of a proton gradient across the membrane. The alpha chain is a regulatory subunit. The polypeptide is ATP synthase subunit alpha, chloroplastic (Tetradesmus obliquus (Green alga)).